The chain runs to 199 residues: Holliday junction branch migration complex subunit RuvA (199 aa).

The segment at 1–63 (MYEYLTGLVT…EDNISLFGFT (63 aa)) is domain I. The domain II stretch occupies residues 64–142 (DQNEKNLFMQ…NESSSSLFAT (79 aa)). Positions 143–149 (TQLTVDA) are flexible linker. Residues 150–199 (TVNRELKDALEALAALGYKERDIKKVQKALMKEEQMATDEYLRQALRLLN) form a domain III region.

Belongs to the RuvA family. Homotetramer. Forms an RuvA(8)-RuvB(12)-Holliday junction (HJ) complex. HJ DNA is sandwiched between 2 RuvA tetramers; dsDNA enters through RuvA and exits via RuvB. An RuvB hexamer assembles on each DNA strand where it exits the tetramer. Each RuvB hexamer is contacted by two RuvA subunits (via domain III) on 2 adjacent RuvB subunits; this complex drives branch migration. In the full resolvosome a probable DNA-RuvA(4)-RuvB(12)-RuvC(2) complex forms which resolves the HJ.

Its subcellular location is the cytoplasm. Functionally, the RuvA-RuvB-RuvC complex processes Holliday junction (HJ) DNA during genetic recombination and DNA repair, while the RuvA-RuvB complex plays an important role in the rescue of blocked DNA replication forks via replication fork reversal (RFR). RuvA specifically binds to HJ cruciform DNA, conferring on it an open structure. The RuvB hexamer acts as an ATP-dependent pump, pulling dsDNA into and through the RuvAB complex. HJ branch migration allows RuvC to scan DNA until it finds its consensus sequence, where it cleaves and resolves the cruciform DNA. In Limosilactobacillus reuteri subsp. reuteri (strain JCM 1112) (Lactobacillus reuteri), this protein is Holliday junction branch migration complex subunit RuvA.